The following is a 110-amino-acid chain: Ferredoxin (110 aa).

2 consecutive 4Fe-4S ferredoxin-type domains span residues 2–30 and 31–60; these read TYIV…YEGE and FMLV…PESP. Residues Cys-9 and Cys-17 each coordinate [3Fe-4S] cluster. [4Fe-4S] cluster contacts are provided by Cys-21, Cys-40, Cys-43, and Cys-46. Cys-50 is a [3Fe-4S] cluster binding site.

It depends on [4Fe-4S] cluster as a cofactor. Requires [3Fe-4S] cluster as cofactor.

In terms of biological role, ferredoxins are iron-sulfur proteins that transfer electrons in a wide variety of metabolic reactions. This chain is Ferredoxin (fdxA), found in Rickettsia typhi (strain ATCC VR-144 / Wilmington).